The chain runs to 954 residues: Glycine dehydrogenase (decarboxylating) (954 aa).

Lysine 706 is modified (N6-(pyridoxal phosphate)lysine).

It belongs to the GcvP family. In terms of assembly, the glycine cleavage system is composed of four proteins: P, T, L and H. The cofactor is pyridoxal 5'-phosphate.

The catalysed reaction is N(6)-[(R)-lipoyl]-L-lysyl-[glycine-cleavage complex H protein] + glycine + H(+) = N(6)-[(R)-S(8)-aminomethyldihydrolipoyl]-L-lysyl-[glycine-cleavage complex H protein] + CO2. In terms of biological role, the glycine cleavage system catalyzes the degradation of glycine. The P protein binds the alpha-amino group of glycine through its pyridoxal phosphate cofactor; CO(2) is released and the remaining methylamine moiety is then transferred to the lipoamide cofactor of the H protein. This is Glycine dehydrogenase (decarboxylating) from Thermosynechococcus vestitus (strain NIES-2133 / IAM M-273 / BP-1).